The following is a 482-amino-acid chain: 2-succinylbenzoate--CoA ligase (482 aa).

Belongs to the ATP-dependent AMP-binding enzyme family. MenE subfamily.

It carries out the reaction 2-succinylbenzoate + ATP + CoA = 2-succinylbenzoyl-CoA + AMP + diphosphate. It functions in the pathway quinol/quinone metabolism; 1,4-dihydroxy-2-naphthoate biosynthesis; 1,4-dihydroxy-2-naphthoate from chorismate: step 5/7. Its pathway is quinol/quinone metabolism; menaquinone biosynthesis. Converts 2-succinylbenzoate (OSB) to 2-succinylbenzoyl-CoA (OSB-CoA). This Bacillus cereus (strain ZK / E33L) protein is 2-succinylbenzoate--CoA ligase.